The sequence spans 319 residues: Vomeronasal type-1 receptor 51 (319 aa).

Over 1 to 31 (MNEILFFSPQPLFSHMMNENSRVHTHSNLRH) the chain is Extracellular. The helical transmembrane segment at 32 to 52 (IFFSEIGIGISGNSFLLLFHI) threads the bilayer. Residues 53-65 (LKFIHGHRSRLSD) lie on the Cytoplasmic side of the membrane. Residues 66 to 86 (LPIGLLSLIHLLMLLVMAFIA) traverse the membrane as a helical segment. At 87–109 (TDIFISWRGWDDIICKFLVYLYR) the chain is on the extracellular side. The cysteines at positions 101 and 188 are disulfide-linked. A helical membrane pass occupies residues 110 to 130 (VLRGLSLCTTSMLSVLQAIIL). At 131–150 (SPRSSCLAKFKRKSLHHISC) the chain is on the cytoplasmic side. The helical transmembrane segment at 151-171 (AILFLSVLYMLIGSQLLVSII) threads the bilayer. Residues 172-203 (ATPNLTTNDFIYVTQSCSILPLSYVMQSMFST) lie on the Extracellular side of the membrane. The N-linked (GlcNAc...) asparagine glycan is linked to Asn175. The helical transmembrane segment at 204 to 224 (LLVIRDVFLISLMVLSTWYMV) threads the bilayer. The Cytoplasmic portion of the chain corresponds to 225-254 (ALLCRHRKKTQHLQGISLSPKTSPKQRATQ). Residues 255-275 (TLLMLMSFFVLMTIYDTIVSC) form a helical membrane-spanning segment. At 276–285 (SRTMFLNDPT) the chain is on the extracellular side. A helical membrane pass occupies residues 286 to 306 (SYNMQIFVVHIYATVSPFVFM). At 307-319 (STEKHIVNCLRSV) the chain is on the cytoplasmic side.

This sequence belongs to the G-protein coupled receptor 1 family. In terms of tissue distribution, expressed in a subset of sensory neurons located in the apical layer of the vomeronasal organ.

The protein resides in the cell membrane. In terms of biological role, putative pheromone receptor implicated in the regulation of social as well as reproductive behavior. In Mus musculus (Mouse), this protein is Vomeronasal type-1 receptor 51 (Vmn1r51).